The following is a 296-amino-acid chain: Ribosomal RNA small subunit methyltransferase A (296 aa).

S-adenosyl-L-methionine is bound by residues Asn-30, Leu-32, Gly-57, Glu-78, Asp-103, and Asn-128.

Belongs to the class I-like SAM-binding methyltransferase superfamily. rRNA adenine N(6)-methyltransferase family. RsmA subfamily.

The protein resides in the cytoplasm. The enzyme catalyses adenosine(1518)/adenosine(1519) in 16S rRNA + 4 S-adenosyl-L-methionine = N(6)-dimethyladenosine(1518)/N(6)-dimethyladenosine(1519) in 16S rRNA + 4 S-adenosyl-L-homocysteine + 4 H(+). Functionally, specifically dimethylates two adjacent adenosines (A1518 and A1519) in the loop of a conserved hairpin near the 3'-end of 16S rRNA in the 30S particle. May play a critical role in biogenesis of 30S subunits. This chain is Ribosomal RNA small subunit methyltransferase A, found in Staphylococcus carnosus (strain TM300).